The sequence spans 377 residues: Probable staphylococcal-like nuclease CAN3 (377 aa).

G2 is lipidated: N-myristoyl glycine. A lipid anchor (S-palmitoyl cysteine) is attached at C7. The tract at residues G15–P57 is disordered. Low complexity predominate over residues P27–P38. The TNase-like domain occupies N177–S353. Residue D190 participates in Ca(2+) binding. The active site involves R260. D265 is a binding site for Ca(2+). Active-site residues include E268 and R302.

Belongs to the thermonuclease family. Ca(2+) is required as a cofactor.

Its subcellular location is the cell membrane. In terms of biological role, enzyme that catalyzes the hydrolysis of both DNA and RNA at the 5' position of the phosphodiester bond. In Oryza sativa subsp. japonica (Rice), this protein is Probable staphylococcal-like nuclease CAN3.